Reading from the N-terminus, the 406-residue chain is O-succinylhomoserine sulfhydrylase (406 aa).

Lysine 219 bears the N6-(pyridoxal phosphate)lysine mark.

This sequence belongs to the trans-sulfuration enzymes family. MetZ subfamily. As to quaternary structure, homotetramer. Requires pyridoxal 5'-phosphate as cofactor.

The enzyme catalyses O-succinyl-L-homoserine + hydrogen sulfide = L-homocysteine + succinate. Its pathway is amino-acid biosynthesis; L-methionine biosynthesis via de novo pathway; L-homocysteine from O-succinyl-L-homoserine: step 1/1. Functionally, catalyzes the formation of L-homocysteine from O-succinyl-L-homoserine (OSHS) and hydrogen sulfide. The sequence is that of O-succinylhomoserine sulfhydrylase from Mycobacterium tuberculosis (strain CDC 1551 / Oshkosh).